Consider the following 332-residue polypeptide: MMSKIDLDISNLPDTTISVREVFGIDTDLRVPAYSKGDAYVPDLDPDYLFDRETTLAILAGFAHNRRVMVSGYHGTGKSTHIEQVAARLNWPCVRVNLDSHVSRIDLVGKDAIVVKDGLQVTEFKDGILPWAYQHNVALVFDEYDAGRPDVMFVIQRVLESSGRLTLLDQSRVIRPHPAFRLFATANTVGLGDTTGLYHGTQQINQAQMDRWSIVTTLNYLPHDKEVDIVAAKVKGFTADKGRETVSKMVRVADLTRAAFINGDLSTVMSPRTVITWAENAHIFGDIAFAFRVTFLNKCDELERALVAEHYQRAFGIELKECAANIVLEATA.

As to quaternary structure, heterotrimer of CobN, CobS and CobT.

The protein localises to the cytoplasm. It catalyses the reaction hydrogenobyrinate a,c-diamide + Co(2+) + ATP + H2O = cob(II)yrinate a,c diamide + ADP + phosphate + 5 H(+). It functions in the pathway cofactor biosynthesis; adenosylcobalamin biosynthesis; cob(II)yrinate a,c-diamide from precorrin-2 (aerobic route): step 10/10. Its function is as follows. Catalyzes cobalt insertion in the corrin ring. This is Aerobic cobaltochelatase subunit CobS (cobS) from Sinorhizobium sp.